Consider the following 156-residue polypeptide: Organelle RRM domain-containing protein 2, mitochondrial (156 aa).

The N-terminal 28 residues, 1-28 (MAMAMRLPAISRAVTEVASAPVGLRRLF), are a transit peptide targeting the mitochondrion. Residues 56–134 (TNLFVSGLSK…WVIFAEYARP (79 aa)) enclose the RRM domain. The residue at position 64 (serine 64) is a Phosphoserine. Positions 137–148 (QSQSYQPQNNMS) are enriched in polar residues. The tract at residues 137-156 (QSQSYQPQNNMSRPPYYGNR) is disordered.

In terms of assembly, interacts with RBG3/ORRM3. Binds to RBG2/ORRM5.

The protein resides in the mitochondrion. In terms of biological role, involved in C-to-U editing of mitochondrial RNA. Functions as minor mitochondrial editing factor. Controls 6 percent of the mitochondrial editing sites. This is Organelle RRM domain-containing protein 2, mitochondrial from Arabidopsis thaliana (Mouse-ear cress).